We begin with the raw amino-acid sequence, 307 residues long: UDP-N-acetylenolpyruvoylglucosamine reductase (307 aa).

The FAD-binding PCMH-type domain maps to 21 to 183 (RVGGPADLFF…TEVVMEGPPG (163 aa)). Residue Arg-163 is part of the active site. The span at 200-209 (EATQPTKDRT) shows a compositional bias: basic and acidic residues. The interval 200–227 (EATQPTKDRTAGSTFRNPAGFSSTGRAD) is disordered. Over residues 210 to 224 (AGSTFRNPAGFSSTG) the composition is skewed to polar residues. The Proton donor role is filled by Ser-212. The active site involves Glu-294.

The protein belongs to the MurB family. The cofactor is FAD.

It is found in the cytoplasm. It catalyses the reaction UDP-N-acetyl-alpha-D-muramate + NADP(+) = UDP-N-acetyl-3-O-(1-carboxyvinyl)-alpha-D-glucosamine + NADPH + H(+). The protein operates within cell wall biogenesis; peptidoglycan biosynthesis. Functionally, cell wall formation. The protein is UDP-N-acetylenolpyruvoylglucosamine reductase of Dinoroseobacter shibae (strain DSM 16493 / NCIMB 14021 / DFL 12).